The primary structure comprises 302 residues: tRNA-cytidine(32) 2-sulfurtransferase (302 aa).

Residues 44 to 49 carry the PP-loop motif motif; it reads SGGKDS. The [4Fe-4S] cluster site is built by C119, C122, and C210.

Belongs to the TtcA family. Homodimer. The cofactor is Mg(2+). It depends on [4Fe-4S] cluster as a cofactor.

The protein localises to the cytoplasm. It carries out the reaction cytidine(32) in tRNA + S-sulfanyl-L-cysteinyl-[cysteine desulfurase] + AH2 + ATP = 2-thiocytidine(32) in tRNA + L-cysteinyl-[cysteine desulfurase] + A + AMP + diphosphate + H(+). It participates in tRNA modification. Its function is as follows. Catalyzes the ATP-dependent 2-thiolation of cytidine in position 32 of tRNA, to form 2-thiocytidine (s(2)C32). The sulfur atoms are provided by the cysteine/cysteine desulfurase (IscS) system. The sequence is that of tRNA-cytidine(32) 2-sulfurtransferase from Tolumonas auensis (strain DSM 9187 / NBRC 110442 / TA 4).